Here is a 432-residue protein sequence, read N- to C-terminus: Succinate--CoA ligase [GDP-forming] subunit beta, mitochondrial (432 aa).

The N-terminal 37 residues, 1–37 (MASPVAAQAGKLLRALALRPRFLAAGSQAVQLTSRRW), are a transit peptide targeting the mitochondrion. The 229-residue stretch at 46 to 274 (KKLMSDNGVR…NAEFRQKDIF (229 aa)) folds into the ATP-grasp domain. Gln57 is a binding site for GTP. Lys73 is subject to N6-acetyllysine. Residue Lys78 is modified to N6-succinyllysine. 90 to 92 (GRG) provides a ligand contact to GTP. Lys132 and Lys139 each carry N6-acetyllysine. A GTP-binding site is contributed by Leu146. Ser161 bears the Phosphoserine mark. Residues Lys200, Lys218, and Lys227 each carry the N6-acetyllysine modification. Positions 243 and 257 each coordinate Mg(2+). An N6-acetyllysine mark is found at Lys271 and Lys291. A substrate-binding site is contributed by Asn308. An N6-succinyllysine modification is found at Lys338. Lys347 bears the N6-acetyllysine mark. Substrate is bound at residue 365-367 (GIV). Residues Lys386 and Lys423 each carry the N6-acetyllysine modification.

The protein belongs to the succinate/malate CoA ligase beta subunit family. GTP-specific subunit beta subfamily. Heterodimer of an alpha and a beta subunit. The beta subunit determines specificity for GTP. The cofactor is Mg(2+). As to expression, mainly expressed in liver, kidney, heart, spleen and skeletal muscle. Also found in intestine and colon, and in low amounts in lung, brain, prostate, testis and ovary.

Its subcellular location is the mitochondrion. The catalysed reaction is GTP + succinate + CoA = succinyl-CoA + GDP + phosphate. Its pathway is carbohydrate metabolism; tricarboxylic acid cycle; succinate from succinyl-CoA (ligase route): step 1/1. Its function is as follows. GTP-specific succinyl-CoA synthetase functions in the citric acid cycle (TCA), coupling the hydrolysis of succinyl-CoA to the synthesis of GTP and thus represents the only step of substrate-level phosphorylation in the TCA. The beta subunit provides nucleotide specificity of the enzyme and binds the substrate succinate, while the binding sites for coenzyme A and phosphate are found in the alpha subunit. The chain is Succinate--CoA ligase [GDP-forming] subunit beta, mitochondrial from Homo sapiens (Human).